The following is a 379-amino-acid chain: Cytochrome b (379 aa).

4 helical membrane passes run 34–54 (FGSL…LLAM), 78–99 (WLIR…YFHI), 114–134 (WNTG…GYVL), and 179–199 (FFAL…IHLT). The heme b site is built by histidine 84 and histidine 98. Heme b contacts are provided by histidine 183 and histidine 197. Histidine 202 is an a ubiquinone binding site. The next 4 membrane-spanning stretches (helical) occupy residues 227 to 247 (LKDI…TFFS), 289 to 309 (LGGV…PLLH), 321 to 341 (FSQV…WVGS), and 348 to 368 (FIAI…VLFP).

The protein belongs to the cytochrome b family. As to quaternary structure, the cytochrome bc1 complex contains 11 subunits: 3 respiratory subunits (MT-CYB, CYC1 and UQCRFS1), 2 core proteins (UQCRC1 and UQCRC2) and 6 low-molecular weight proteins (UQCRH/QCR6, UQCRB/QCR7, UQCRQ/QCR8, UQCR10/QCR9, UQCR11/QCR10 and a cleavage product of UQCRFS1). This cytochrome bc1 complex then forms a dimer. The cofactor is heme b.

It is found in the mitochondrion inner membrane. Its function is as follows. Component of the ubiquinol-cytochrome c reductase complex (complex III or cytochrome b-c1 complex) that is part of the mitochondrial respiratory chain. The b-c1 complex mediates electron transfer from ubiquinol to cytochrome c. Contributes to the generation of a proton gradient across the mitochondrial membrane that is then used for ATP synthesis. This is Cytochrome b (MT-CYB) from Apteryx australis (Southern brown kiwi).